Here is a 115-residue protein sequence, read N- to C-terminus: Large ribosomal subunit protein uL22 (115 aa).

It belongs to the universal ribosomal protein uL22 family. Part of the 50S ribosomal subunit.

In terms of biological role, this protein binds specifically to 23S rRNA; its binding is stimulated by other ribosomal proteins, e.g. L4, L17, and L20. It is important during the early stages of 50S assembly. It makes multiple contacts with different domains of the 23S rRNA in the assembled 50S subunit and ribosome. The globular domain of the protein is located near the polypeptide exit tunnel on the outside of the subunit, while an extended beta-hairpin is found that lines the wall of the exit tunnel in the center of the 70S ribosome. The chain is Large ribosomal subunit protein uL22 from Nitrosospira multiformis (strain ATCC 25196 / NCIMB 11849 / C 71).